Here is a 458-residue protein sequence, read N- to C-terminus: Probable alpha-L-glutamate ligase (458 aa).

The unknown stretch occupies residues 1-162 (MSDNKFIIGS…YGVKTAKKSG (162 aa)). An alpha-L-glutamate ligase region spans residues 163–458 (LKIGLLASNP…IEKKLGWKAD (296 aa)). Residues 267–450 (LQLLQKNNLD…IAGAMIESIE (184 aa)) enclose the ATP-grasp domain. ATP-binding positions include Lys304, 341–342 (EF), Asp350, and 374–376 (RAN). Residues Asp411, Glu423, and Asn425 each contribute to the Mg(2+) site. Residues Asp411, Glu423, and Asn425 each contribute to the Mn(2+) site.

The protein in the C-terminal section; belongs to the RimK family. It depends on Mg(2+) as a cofactor. Mn(2+) serves as cofactor.

This Shewanella pealeana (strain ATCC 700345 / ANG-SQ1) protein is Probable alpha-L-glutamate ligase.